Consider the following 229-residue polypeptide: Endonuclease V (229 aa).

Mg(2+) contacts are provided by D36 and D104.

It belongs to the endonuclease V family. Mg(2+) serves as cofactor.

The protein localises to the cytoplasm. It carries out the reaction Endonucleolytic cleavage at apurinic or apyrimidinic sites to products with a 5'-phosphate.. In terms of biological role, DNA repair enzyme involved in the repair of deaminated bases. Selectively cleaves double-stranded DNA at the second phosphodiester bond 3' to a deoxyinosine leaving behind the intact lesion on the nicked DNA. The chain is Endonuclease V from Pectobacterium carotovorum subsp. carotovorum (strain PC1).